A 273-amino-acid chain; its full sequence is Undecaprenyl-diphosphatase (273 aa).

A run of 8 helical transmembrane segments spans residues 4–24 (IELL…WLPI), 45–65 (FMSM…VVLF), 84–104 (TFTL…MIPF), 112–132 (FFNP…FIII), 149–169 (ITYQ…IPGT), 187–207 (YVAA…ASLL), 219–239 (AEIV…IIVI), and 251–271 (FKVF…YFLL).

It belongs to the UppP family.

The protein localises to the cell membrane. It catalyses the reaction di-trans,octa-cis-undecaprenyl diphosphate + H2O = di-trans,octa-cis-undecaprenyl phosphate + phosphate + H(+). Functionally, catalyzes the dephosphorylation of undecaprenyl diphosphate (UPP). Confers resistance to bacitracin. The chain is Undecaprenyl-diphosphatase from Lachnoclostridium phytofermentans (strain ATCC 700394 / DSM 18823 / ISDg) (Clostridium phytofermentans).